Here is a 220-residue protein sequence, read N- to C-terminus: 5'(3')-deoxyribonucleotidase, mitochondrial (220 aa).

The transit peptide at 1–23 directs the protein to the mitochondrion; sequence MHRLRGCCARPRGAPLRAERSRA. Aspartate 33 (nucleophile) is an active-site residue. Positions 33 and 35 each coordinate Mg(2+). Catalysis depends on aspartate 35, which acts as the Proton donor. Substrate contacts are provided by aspartate 35, phenylalanine 41, phenylalanine 67, tryptophan 68, valine 69, tryptophan 88, threonine 122, and lysine 157. Aspartate 168 contacts Mg(2+).

The protein belongs to the 5'(3')-deoxyribonucleotidase family. In terms of assembly, homodimer. The cofactor is Mg(2+).

The protein resides in the mitochondrion. In terms of biological role, dephosphorylates specifically the 5' and 2'(3')-phosphates of uracil and thymine deoxyribonucleotides, and so protects mitochondrial DNA replication from excess dTTP. Has only marginal activity towards dIMP and dGMP. The chain is 5'(3')-deoxyribonucleotidase, mitochondrial (Nt5m) from Mus musculus (Mouse).